Here is a 321-residue protein sequence, read N- to C-terminus: Malate dehydrogenase (321 aa).

NAD(+) is bound by residues 10–15 (GAGQIG) and aspartate 34. Substrate contacts are provided by arginine 83 and arginine 89. NAD(+) is bound by residues asparagine 96 and 119-121 (ITN). 2 residues coordinate substrate: asparagine 121 and arginine 152. Histidine 176 (proton acceptor) is an active-site residue.

The protein belongs to the LDH/MDH superfamily. MDH type 3 family.

It carries out the reaction (S)-malate + NAD(+) = oxaloacetate + NADH + H(+). Catalyzes the reversible oxidation of malate to oxaloacetate. The chain is Malate dehydrogenase from Xanthobacter autotrophicus (strain ATCC BAA-1158 / Py2).